We begin with the raw amino-acid sequence, 326 residues long: HTH-type transcriptional regulator BlaA (326 aa).

The HTH lysR-type domain occupies 1–59 (MDVVNACRAFVKVSERGSFTVGAAAAQMSQSVASRRVAALEKHFGERLFDRASRRPSLT). Residues 19-38 (FTVGAAAAQMSQSVASRRVA) constitute a DNA-binding region (H-T-H motif). The tract at residues 289 to 326 (TADHGPDPATGAGPGADAGTEPGARAEPGAPEEGAQAC) is disordered. A compositionally biased stretch (low complexity) spans 295–326 (DPATGAGPGADAGTEPGARAEPGAPEEGAQAC).

The protein belongs to the LysR transcriptional regulatory family.

Positive regulator of the expression of the gene (blaB) for beta-lactamase. It binds to the blaL-blaA intercistronic region. The protein is HTH-type transcriptional regulator BlaA (blaA) of Streptomyces cacaoi.